The primary structure comprises 393 residues: 1-deoxy-D-xylulose 5-phosphate reductoisomerase (393 aa).

Threonine 10, glycine 11, serine 12, isoleucine 13, arginine 37, glutamine 38, and asparagine 124 together coordinate NADPH. A 1-deoxy-D-xylulose 5-phosphate-binding site is contributed by lysine 125. Glutamate 126 is a binding site for NADPH. Aspartate 150 lines the Mn(2+) pocket. Positions 151, 152, 179, and 202 each coordinate 1-deoxy-D-xylulose 5-phosphate. Residue glutamate 152 coordinates Mn(2+). Glycine 208 lines the NADPH pocket. 1-deoxy-D-xylulose 5-phosphate is bound by residues serine 215, asparagine 220, lysine 221, and glutamate 224. Glutamate 224 contacts Mn(2+).

Belongs to the DXR family. Mg(2+) serves as cofactor. Requires Mn(2+) as cofactor.

It catalyses the reaction 2-C-methyl-D-erythritol 4-phosphate + NADP(+) = 1-deoxy-D-xylulose 5-phosphate + NADPH + H(+). It functions in the pathway isoprenoid biosynthesis; isopentenyl diphosphate biosynthesis via DXP pathway; isopentenyl diphosphate from 1-deoxy-D-xylulose 5-phosphate: step 1/6. Functionally, catalyzes the NADPH-dependent rearrangement and reduction of 1-deoxy-D-xylulose-5-phosphate (DXP) to 2-C-methyl-D-erythritol 4-phosphate (MEP). The chain is 1-deoxy-D-xylulose 5-phosphate reductoisomerase from Cupriavidus taiwanensis (strain DSM 17343 / BCRC 17206 / CCUG 44338 / CIP 107171 / LMG 19424 / R1) (Ralstonia taiwanensis (strain LMG 19424)).